The sequence spans 273 residues: Shikimate dehydrogenase (NADP(+)) (273 aa).

Residues 15 to 17 and Thr-62 each bind shikimate; that span reads SLS. The Proton acceptor role is filled by Lys-66. Glu-78 contributes to the NADP(+) binding site. Shikimate contacts are provided by Asn-87 and Asp-102. NADP(+) is bound by residues 126-130, 149-154, Ile-215, and Gly-238; these read GAGGA and NRTPER.

This sequence belongs to the shikimate dehydrogenase family. In terms of assembly, homodimer.

The enzyme catalyses shikimate + NADP(+) = 3-dehydroshikimate + NADPH + H(+). Its pathway is metabolic intermediate biosynthesis; chorismate biosynthesis; chorismate from D-erythrose 4-phosphate and phosphoenolpyruvate: step 4/7. Its function is as follows. Involved in the biosynthesis of the chorismate, which leads to the biosynthesis of aromatic amino acids. Catalyzes the reversible NADPH linked reduction of 3-dehydroshikimate (DHSA) to yield shikimate (SA). In Desulfitobacterium hafniense (strain Y51), this protein is Shikimate dehydrogenase (NADP(+)).